We begin with the raw amino-acid sequence, 429 residues long: MSIQEDGLEPMLLAIGIDSFDTPLAGCTTHFTSILAYTLSIHGYRLADYPWLVRLNPAVPWKTRGNGATALLVSVDREDEARRVAEEVTSRLAKAYGSTGKESFVAILLYHADNLQDYITARPHCLVELYRRAVHELVPLKTAMNCLESIREDGKTKLIALHGSTHRGLVGALAALGADLITDHTFELIVYRKPRMWSEPRRIDEDSIIEFDLKTRPLTFLNYDYEQSKPLIAPHGFDPVLYGVRGEEPHILLKALKIIDVEEEPSHWTIFRTNQATNAHLQRKEIERVRPYDNAIVCGVIEDTKPIPGGHVIVRLCNNTCIDTAFYRETGRLRNHVLKLPRGTLVEVGGQVKPHTDKLTLNAEYLRILEPASLRAGGCTATIPSGRNVILYPPRAAFHHLMKPPERPLHPSKSLEPPSTPIHSDTISL.

The segment at 403–429 is disordered; that stretch reads KPPERPLHPSKSLEPPSTPIHSDTISL.

Belongs to the TiaS family.

The protein resides in the cytoplasm. It carries out the reaction cytidine(34) in tRNA(Ile2) + agmatine + ATP + H2O = 2-agmatinylcytidine(34) in tRNA(Ile2) + AMP + 2 phosphate + 2 H(+). ATP-dependent agmatine transferase that catalyzes the formation of 2-agmatinylcytidine (agm2C) at the wobble position (C34) of tRNA(Ile2), converting the codon specificity from AUG to AUA. The polypeptide is tRNA(Ile2) 2-agmatinylcytidine synthetase TiaS (Hyperthermus butylicus (strain DSM 5456 / JCM 9403 / PLM1-5)).